The chain runs to 663 residues: A-type ATP synthase subunit I (663 aa).

The next 7 membrane-spanning stretches (helical) occupy residues 376–396, 412–432, 468–488, 497–517, 534–554, 568–588, and 589–609; these read FFFGFMLTDFLYGLIVGIVAA, FAYILLWSAFFTMLLGALFGS, LAALAIGLAHLFLGYTLGFVI, GAVFEQLPWMIIIIGVALLAS, IALFAVGELVINGGLAALMII, ARLMALALATGGIAMVINVLV, and GMVWAIKFLYIGPIIGLIIFF.

It belongs to the V-ATPase 116 kDa subunit family. Has multiple subunits with at least A(3), B(3), C, D, E, F, H, I and proteolipid K(x).

It is found in the cell membrane. In terms of biological role, component of the A-type ATP synthase that produces ATP from ADP in the presence of a proton gradient across the membrane. This Thermococcus kodakarensis (strain ATCC BAA-918 / JCM 12380 / KOD1) (Pyrococcus kodakaraensis (strain KOD1)) protein is A-type ATP synthase subunit I.